A 50-amino-acid chain; its full sequence is Sperm protamine P1 (50 aa).

Intrachain disulfides connect Cys-7–Cys-15 and Cys-38–Cys-46.

This sequence belongs to the protamine P1 family. In terms of assembly, cross-linked by interchain disulfide bonds around the DNA-helix. As to expression, testis.

It is found in the nucleus. The protein resides in the chromosome. Its function is as follows. Protamines substitute for histones in the chromatin of sperm during the haploid phase of spermatogenesis. They compact sperm DNA into a highly condensed, stable and inactive complex. The chain is Sperm protamine P1 (PRM1) from Equus asinus (Donkey).